The sequence spans 3177 residues: Proliferation marker protein Ki-67 (3177 aa).

In terms of domain architecture, FHA spans 27–76; sequence CLFGRSIECDIRIQLPVVSKRHCKIEVKEQEAILYNFSSTNPTQVNGVTI. 2 stretches are compositionally biased toward basic and acidic residues: residues 98 to 107 and 116 to 126; these read EDGNHEDGSK and LGKEPSRRASR. 2 disordered regions span residues 98–442 and 473–572; these read EDGN…PGLS and RPEL…ASIS. Phosphoserine occurs at positions 125, 128, and 162. Composition is skewed to polar residues over residues 165 to 177 and 202 to 221; these read SDGS…QDSS and STGS…LSNS. The span at 235–263 shows a compositional bias: basic and acidic residues; that stretch reads MKEELDVKSQKSCRKSEPQPDRAAEESRE. Residue lysine 236 forms a Glycyl lysine isopeptide (Lys-Gly) (interchain with G-Cter in SUMO2) linkage. Phosphoserine is present on residues serine 250, serine 276, serine 277, serine 286, and serine 287. Positions 276-286 are enriched in polar residues; it reads SSGSTPVTAAS. 2 positions are modified to phosphothreonine: threonine 307 and threonine 316. Serine 321, serine 337, serine 373, serine 498, serine 503, and serine 588 each carry phosphoserine. Positions 455 to 618 are positively charged patch (CP); that stretch reads KSEGMPMKRR…VKQTQTKVAK (164 aa). Residues 462–509 form the PP1-binding domain; that stretch reads KRRRVSFGGHLRPELFDENLPPNTPLKRGETPTKRKSLGTHSPAVLKT. A disordered region spans residues 614–652; that stretch reads TKVAKHVPQKQTSKRQRRPSTPKKPTSNLHNQFTTGHAN. Over residues 616-634 the composition is skewed to basic residues; sequence VAKHVPQKQTSKRQRRPST. Polar residues predominate over residues 636 to 652; it reads KKPTSNLHNQFTTGHAN. Position 701 is a phosphothreonine (threonine 701). Disordered stretches follow at residues 793–815, 835–901, and 956–989; these read LEKK…SKLR, VLAE…LGSQ, and KHSP…DKPI. Residues 855–864 are compositionally biased toward polar residues; sequence DQQVQDNENA. 2 stretches are compositionally biased toward basic and acidic residues: residues 867-882 and 975-989; these read RCKE…EKTS and LKEH…DKPI. K167R repeat units lie at residues 994 to 1101, 1108 to 1216, 1228 to 1336, 1348 to 1450, 1461 to 1569, 1582 to 1684, 1696 to 1806, 1817 to 1925, 1937 to 2046, 2059 to 2163, 2175 to 2284, 2296 to 2405, 2419 to 2526, 2537 to 2639, 2643 to 2748, and 2762 to 2870; these read TRVL…FISP, KKIP…FQTP, SAKI…FQTP, SAKM…FQIP, KTKK…FQMP, TMLA…LFQT, KQTR…FQTP, ETTK…FQTP, VKMS…FQTP, SAKM…FQTP, SAKI…VFQT, AKLP…CQAP, KTPK…SFQE, KRIS…PIQT, and TQMP…ITQI. Residues lysine 1013 and lysine 1026 each participate in a glycyl lysine isopeptide (Lys-Gly) (interchain with G-Cter in SUMO2) cross-link. Serine 1062 carries the phosphoserine modification. A Glycyl lysine isopeptide (Lys-Gly) (interchain with G-Cter in SUMO1); alternate cross-link involves residue lysine 1082. Lysine 1082 is covalently cross-linked (Glycyl lysine isopeptide (Lys-Gly) (interchain with G-Cter in SUMO2); alternate). Disordered regions lie at residues 1109 to 1321 and 1334 to 1410; these read KIPS…IRAQ and QTPA…ENDC. Phosphoserine is present on serine 1114. Over residues 1114–1127 the composition is skewed to polar residues; sequence SPHTQPVRTPASTK. Threonine 1122 is modified (phosphothreonine). Serine 1125 is subject to Phosphoserine. Threonine 1150 is subject to Phosphothreonine. Serine 1152 carries the post-translational modification Phosphoserine. Residues threonine 1159 and threonine 1175 each carry the phosphothreonine modification. Serine 1189 carries the phosphoserine modification. Threonine 1215 carries the phosphothreonine modification. Serine 1235 is modified (phosphoserine). Threonine 1243, threonine 1279, threonine 1295, threonine 1307, and threonine 1315 each carry phosphothreonine. Over residues 1308-1317 the composition is skewed to basic residues; that stretch reads GHKRRPRTPK. Lysine 1317 is covalently cross-linked (Glycyl lysine isopeptide (Lys-Gly) (interchain with G-Cter in SUMO2)). Threonine 1335 carries the phosphothreonine modification. Polar residues predominate over residues 1353–1368; that stretch reads LESSQAEPVKTPASTK. At serine 1356 the chain carries Phosphoserine. Threonine 1363 is subject to Phosphothreonine. The residue at position 1366 (serine 1366) is a Phosphoserine. Residues 1371 to 1384 are compositionally biased toward basic and acidic residues; that stretch reads SKTDLSKVDVREDP. A phosphothreonine mark is found at threonine 1400 and threonine 1416. Position 1469 is a phosphoserine (serine 1469). The residue at position 1477 (threonine 1477) is a Phosphothreonine. Serine 1480 is subject to Phosphoserine. The residue at position 1513 (threonine 1513) is a Phosphothreonine. Residues 1526 to 1550 are disordered; it reads RKPAKRKLDSTAGMPNSKRMRCSSK. 2 positions are modified to phosphoserine: serine 1542 and serine 1587. Lysine 1609 is modified (N6-acetyllysine). Residue lysine 1668 forms a Glycyl lysine isopeptide (Lys-Gly) (interchain with G-Cter in SUMO2) linkage. Phosphothreonine occurs at positions 1684 and 1712. Phosphoserine is present on serine 1734. The disordered stretch occupies residues 1749-1797; it reads IPIGPEDDTENKGVKESTPQTLDSSASRTVSKRQQGAHEERPQFSGDLF. Polar residues predominate over residues 1765–1782; it reads STPQTLDSSASRTVSKRQ. Threonine 1766 is modified (phosphothreonine). Serine 1779 is subject to Phosphoserine. Threonine 1805 is modified (phosphothreonine). Serine 1825 bears the Phosphoserine mark. Residues threonine 1859, threonine 1868, threonine 1884, and threonine 1924 each carry the phosphothreonine modification. The disordered stretch occupies residues 1925 to 2033; it reads PAGASDPVSV…QTPKIRAQPL (109 aa). Serine 1944 is subject to Phosphoserine. An N6-acetyllysine modification is found at lysine 1966. Phosphothreonine is present on residues threonine 1989, threonine 2005, and threonine 2025. A Glycyl lysine isopeptide (Lys-Gly) (interchain with G-Cter in SUMO1); alternate cross-link involves residue lysine 2027. Lysine 2027 is covalently cross-linked (Glycyl lysine isopeptide (Lys-Gly) (interchain with G-Cter in SUMO2); alternate). Threonine 2045 bears the Phosphothreonine mark. The tract at residues 2047 to 2112 is disordered; it reads AGANDSVTVE…SPGTPAPVQE (66 aa). Residues 2063 to 2078 show a composition bias toward polar residues; that stretch reads LESSQAEPVKTPASTK. A Phosphoserine modification is found at serine 2065. Residue threonine 2073 is modified to Phosphothreonine. 3 positions are modified to phosphoserine: serine 2076, serine 2095, and serine 2103. A compositionally biased stretch (basic and acidic residues) spans 2088–2101; it reads VDVREDPSILEKKT. Phosphothreonine is present on residues threonine 2106 and threonine 2122. Residues 2124–2343 form a disordered region; it reads KQKLDFTGNS…PLSKSSCASQ (220 aa). Residues 2135-2144 show a composition bias toward basic residues; it reads GHKRRPRTPK. Position 2162 is a phosphothreonine (threonine 2162). Positions 2180–2195 are enriched in polar residues; sequence LESSQAKPVKTPASTK. Residue serine 2182 is modified to Phosphoserine. Threonine 2190 carries the phosphothreonine modification. Residue serine 2198 is modified to Phosphoserine. The residue at position 2218 (threonine 2218) is a Phosphothreonine. Residue serine 2220 is modified to Phosphoserine. Threonine 2227, threonine 2243, and threonine 2283 each carry phosphothreonine. Serine 2303 bears the Phosphoserine mark. A phosphothreonine mark is found at threonine 2311 and threonine 2348. The segment covering 2378–2390 has biased composition (basic residues); it reads RGKRQQRSCKKRS. The disordered stretch occupies residues 2378–2447; the sequence is RGKRQQRSCK…RRQARTGLRK (70 aa). A phosphoserine mark is found at serine 2390 and serine 2392. Threonine 2405 is modified (phosphothreonine). Residues serine 2423 and serine 2425 each carry the phosphoserine modification. Lysine 2451 is covalently cross-linked (Glycyl lysine isopeptide (Lys-Gly) (interchain with G-Cter in SUMO1)). A phosphoserine mark is found at serine 2464, serine 2487, serine 2545, and serine 2592. Over residues 2538–2547 the composition is skewed to basic and acidic residues; that stretch reads TPKMPDKSPE. Disordered regions lie at residues 2538 to 2828 and 2879 to 3160; these read TPKM…QVSK and HDTS…DAKT. Positions 2605-2622 are enriched in polar residues; sequence VQKQDPSVSLTGRRNQPR. Residue serine 2649 is modified to Phosphoserine. 2 stretches are compositionally biased toward basic and acidic residues: residues 2673–2697 and 2704–2714; these read GVKE…KEPV and EEVKKSTKQKI. Lysine 2675 participates in a covalent cross-link: Glycyl lysine isopeptide (Lys-Gly) (interchain with G-Cter in SUMO1); alternate. Lysine 2675 is covalently cross-linked (Glycyl lysine isopeptide (Lys-Gly) (interchain with G-Cter in SUMO2); alternate). Composition is skewed to polar residues over residues 2764–2781 and 2883–2892; these read MPCN…QSSP and ILKSTQQQKP. Phosphoserine occurs at positions 2768 and 2780. Basic and acidic residues predominate over residues 2907–2923; sequence ASKEDPKEVLVDTRDHA. Lysine 2909 is covalently cross-linked (Glycyl lysine isopeptide (Lys-Gly) (interchain with G-Cter in SUMO2)). Lysine 2928 carries the N6-acetyllysine modification. Basic and acidic residues predominate over residues 2959–2971; sequence EATDEKPVPEKKR. Position 2973-2980 (2973-2980) interacts with ATP; that stretch reads ASSKRHVS. Serine 2980 carries the post-translational modification Phosphoserine. Positions 3008-3018 are enriched in basic and acidic residues; the sequence is KTEEMEAKREN. Threonine 3021 bears the Phosphothreonine mark. Basic and acidic residues predominate over residues 3039 to 3057; sequence PKFDASAENVGIKKNEKTM. Over residues 3058–3067 the composition is skewed to polar residues; the sequence is KTASQETELQ. The residue at position 3061 (serine 3061) is a Phosphoserine. 2 stretches are compositionally biased toward basic and acidic residues: residues 3118 to 3132 and 3140 to 3160; these read PQEE…DVRC and VALD…DAKT.

In terms of assembly, interacts with KIF15. Interacts (via the FHA domain) with NIFK. Interacts with PPP1CC. Component of a complex at least composed of ZNF335, HCFC1, CCAR2, EMSY, MKI67, RBBP5, ASH2L and WDR5; the complex is formed as a result of interactions between components of a nuclear receptor-mediated transcription complex and a histone methylation complex. Interacts with ZNF335. In terms of processing, hyperphosphorylated by CDK1 in mitosis; hyperphosphorylatiom prevents undergoing liquid-liquid phase separation. Dephosphorylated by PPP1CC at the onset of anaphase. Dephosphorylation by protein phosphatase 2A (PP2A) and simultaneous exposure of the positively charged patch (CP) during mitotic exit induce the RNA-dependent formation of a liquid-like condensed phase on the chromosome surface. Post-translationally, ubiquitinated by the APC/C complex after neuronal progenitors exit mitosis during brain development, leading to clearance from constitutive heterochromatin. Mainly present in proliferating cells (at protein level).

It localises to the chromosome. The protein resides in the nucleus. The protein localises to the nucleolus. Its function is as follows. Protein that associates with the surface of mitotic chromosomes and acts both as a chromosome repellent during early mitosis and chromosome attractant during late mitosis. Required to maintain individual mitotic chromosomes dispersed in the cytoplasm following nuclear envelope disassembly. During early mitosis, relocalizes from nucleoli to the chromosome surface where it forms extended brush structures that cover a substantial fraction of the chromosome surface. The MKI67 brush structure prevents chromosomes from collapsing into a single chromatin mass by forming a steric and electrostatic charge barrier: the protein has a high net electrical charge and acts as a surfactant, dispersing chromosomes and enabling independent chromosome motility. During mitotic anaphase, the MKI67 brush structure collapses and MKI67 switches from a chromosome repellent to a chromosome attractant to promote chromosome clustering and facilitate the exclusion of large cytoplasmic particles from the future nuclear space. Mechanistically, dephosphorylation during mitotic exit and simultaneous exposure of a conserved basic patch induce the RNA-dependent formation of a liquid-like condensed phase on the chromosome surface, promoting coalescence of neighboring chromosome surfaces and clustering of chromosomes. Binds premature ribosomal RNAs during anaphase; promoting liquid-liquid phase separation. Binds DNA, with a preference for supercoiled DNA and AT-rich DNA. Does not contribute to the internal structure of mitotic chromosomes. May play a role in chromatin organization; it is however unclear whether it plays a direct role in chromatin organization or whether it is an indirect consequence of its function in mitotic chromosome. The chain is Proliferation marker protein Ki-67 from Mus musculus (Mouse).